The following is a 457-amino-acid chain: Siroheme synthase (457 aa).

The interval 4–202 (LPIFCQLRDR…ANADEKAVNA (199 aa)) is precorrin-2 dehydrogenase /sirohydrochlorin ferrochelatase. NAD(+) is bound by residues 22–23 (DV) and 43–44 (LT). The residue at position 128 (Ser128) is a Phosphoserine. Residues 216–448 (GEVVLVGAGP…IIVGRVVALR (233 aa)) are uroporphyrinogen-III C-methyltransferase. Residue Pro225 participates in S-adenosyl-L-methionine binding. The active-site Proton acceptor is Asp248. The Proton donor role is filled by Lys270. S-adenosyl-L-methionine-binding positions include 301–303 (GGD), Ile306, 331–332 (TA), Met382, Gly411, and Ala437.

The protein in the N-terminal section; belongs to the precorrin-2 dehydrogenase / sirohydrochlorin ferrochelatase family. It in the C-terminal section; belongs to the precorrin methyltransferase family. Homodimer.

The catalysed reaction is uroporphyrinogen III + 2 S-adenosyl-L-methionine = precorrin-2 + 2 S-adenosyl-L-homocysteine + H(+). It catalyses the reaction precorrin-2 + NAD(+) = sirohydrochlorin + NADH + 2 H(+). The enzyme catalyses siroheme + 2 H(+) = sirohydrochlorin + Fe(2+). The protein operates within cofactor biosynthesis; adenosylcobalamin biosynthesis; precorrin-2 from uroporphyrinogen III: step 1/1. Its pathway is cofactor biosynthesis; adenosylcobalamin biosynthesis; sirohydrochlorin from precorrin-2: step 1/1. It participates in porphyrin-containing compound metabolism; siroheme biosynthesis; precorrin-2 from uroporphyrinogen III: step 1/1. It functions in the pathway porphyrin-containing compound metabolism; siroheme biosynthesis; siroheme from sirohydrochlorin: step 1/1. The protein operates within porphyrin-containing compound metabolism; siroheme biosynthesis; sirohydrochlorin from precorrin-2: step 1/1. Functionally, multifunctional enzyme that catalyzes the SAM-dependent methylations of uroporphyrinogen III at position C-2 and C-7 to form precorrin-2 via precorrin-1. Then it catalyzes the NAD-dependent ring dehydrogenation of precorrin-2 to yield sirohydrochlorin. Finally, it catalyzes the ferrochelation of sirohydrochlorin to yield siroheme. The polypeptide is Siroheme synthase (Salmonella typhimurium (strain LT2 / SGSC1412 / ATCC 700720)).